Here is a 102-residue protein sequence, read N- to C-terminus: uncharacterized protein (102 aa).

The chain crosses the membrane as a helical span at residues 29-52; it reads IGSTYFCFGGAIFILVAPLTNLVY.

It is found in the membrane. This is an uncharacterized protein from Saccharomyces cerevisiae (strain ATCC 204508 / S288c) (Baker's yeast).